The sequence spans 83 residues: U5-theraphotoxin-Hs1b 2 (83 aa).

The signal sequence occupies residues 1 to 21; sequence MQTSMFLTLTGLVLLFVVCYA. Positions 22 to 49 are excised as a propeptide; sequence SESEEKEFPKELLSSIFAADSDFKEEER. Cystine bridges form between C51-C63, C56-C68, and C62-C75.

The protein belongs to the neurotoxin 10 (Hwtx-1) family. 51 (Hntx-8) subfamily. Hntx-8 sub-subfamily. As to expression, expressed by the venom gland.

It localises to the secreted. Its function is as follows. Agglutinates erythrocytes. This Cyriopagopus schmidti (Chinese bird spider) protein is U5-theraphotoxin-Hs1b 2.